The sequence spans 368 residues: H-2 class I histocompatibility antigen, K-W28 alpha chain (368 aa).

A signal peptide spans 1–21; it reads MAPCMLLLLLAAALAPTQTRA. The segment at 22–111 is alpha-1; the sequence is GPHSLRYFHT…LLRYYNQSAG (90 aa). The Extracellular portion of the chain corresponds to 22–305; sequence GPHSLRYFHT…EPPPSAVSNT (284 aa). N-linked (GlcNAc...) asparagine glycosylation occurs at N107. The tract at residues 112–203 is alpha-2; it reads GSHTIQRMYG…KNGNATLLRT (92 aa). C122 and C185 are oxidised to a cystine. N197 is a glycosylation site (N-linked (GlcNAc...) asparagine). The alpha-3 stretch occupies residues 204–295; it reads DSPKAHVTHH…GLPKPLTLRW (92 aa). The region spanning 206–292 is the Ig-like C1-type domain; that stretch reads PKAHVTHHSR…YHQGLPKPLT (87 aa). C224 and C280 are disulfide-bonded. Residues 296 to 305 are connecting peptide; it reads EPPPSAVSNT. A helical transmembrane segment spans residues 306-329; sequence VIIAVLVVLGAAIVTGAVVAFVMM. Residues 330 to 368 lie on the Cytoplasmic side of the membrane; the sequence is RRRNTGGKGGDYALAPGSQTSDLSLPDCKVMVHDPHSLA. Phosphoserine occurs at positions 350 and 353.

This sequence belongs to the MHC class I family. As to quaternary structure, heterodimer of an alpha chain and a beta chain (beta-2-microglobulin).

It is found in the membrane. Its function is as follows. Involved in the presentation of foreign antigens to the immune system. The polypeptide is H-2 class I histocompatibility antigen, K-W28 alpha chain (H2-K1) (Mus musculus (Mouse)).